The chain runs to 170 residues: Small ribosomal subunit protein bS16 (170 aa).

Residues 114–170 (EGGPTTEAAKPKKKAATSGAKKAAKAAEPEAAAPEAAEPEAAAPAEGGEQAESSTES) form a disordered region. Low complexity predominate over residues 142 to 170 (PEAAAPEAAEPEAAAPAEGGEQAESSTES).

The protein belongs to the bacterial ribosomal protein bS16 family.

The protein is Small ribosomal subunit protein bS16 of Mycobacterium avium (strain 104).